The primary structure comprises 299 residues: MKLEGIYSALLTPFSEDESIDRQAIGALVDFQVRLGIDGVYVGGSSGEAMLQSLDERADYLSDVAAAASGRLTLIAHVGTIATRDALRLSQHAAKSGYQAISAIPPFYYDFSRPEVMAHYRELADVSALPLIVYNFPARTSGFTLPELVELLSHPNIIGIKHTSSDMFQLERIRHAVPDAIVYNGYDEMCLAGFAMGAQGAIGTTYNFMGDLFVALRDCAAAGRIEEARRLQAMANRVIQVLIKVGVMPGSKALLGIMGLPGGPSRRPFRKVEEADLAALREAVAPVLAWRESTSRKSM.

Aceneuramate is bound by residues S45 and S46. The Proton donor role is filled by Y134. The Schiff-base intermediate with substrate role is filled by K161. The aceneuramate site is built by T163, G185, D187, and E188.

It belongs to the DapA family. NanA subfamily. As to quaternary structure, homotetramer.

Its subcellular location is the cytoplasm. The enzyme catalyses aceneuramate = aldehydo-N-acetyl-D-mannosamine + pyruvate. Its pathway is amino-sugar metabolism; N-acetylneuraminate degradation; D-fructose 6-phosphate from N-acetylneuraminate: step 1/5. In terms of biological role, catalyzes the reversible aldol cleavage of N-acetylneuraminic acid (sialic acid; Neu5Ac) to form pyruvate and N-acetylmannosamine (ManNAc) via a Schiff base intermediate. In Rhizobium meliloti (strain 1021) (Ensifer meliloti), this protein is N-acetylneuraminate lyase.